The following is a 466-amino-acid chain: Cysteine--tRNA ligase (466 aa).

Position 28 (Cys28) interacts with Zn(2+). Positions 30–40 (PTVYNYIHIGN) match the 'HIGH' region motif. Residues Cys208, His233, and Glu237 each coordinate Zn(2+). The 'KMSKS' region motif lies at 265 to 269 (KMSKS). Lys268 contacts ATP.

This sequence belongs to the class-I aminoacyl-tRNA synthetase family. Monomer. Zn(2+) serves as cofactor.

It is found in the cytoplasm. It catalyses the reaction tRNA(Cys) + L-cysteine + ATP = L-cysteinyl-tRNA(Cys) + AMP + diphosphate. This is Cysteine--tRNA ligase from Staphylococcus aureus (strain MSSA476).